Consider the following 349-residue polypeptide: MAFKIASSPHVTRNLQTSTVMQRVILCLLPGLVVQCAFFGWGTLIQVLLAIIVALSCEAAVMKLRKRSIKASLGDNSAMLTAILIGVAIPPLAPWWMIVMGTAFAIVIVKHLYGGLGHNLFNPAMAAYVLLLVSFPLQMTTWIAPSTVALNTPSIVDSLQLIFNVGAHVGMEQFRLGIDGISMATPLDTLKTDLSLGLTTTESMAKSIFDGSTGVGWFWVNLAYLAGGIVLLKLKAIRWHISTGVLAGLFVASSVGFLLSPDTHASPLFHLFSGATMLAAFFIATDPVTAATSPRGRIIFGALIGVLVYIIRTQGGYPDAFAFAVLLANLCAPFIDYYVRPRTYGHSAG.

A run of 3 helical transmembrane segments spans residues 36–56 (CAFF…VALS), 77–99 (SAML…WMIV), and 124–144 (AMAA…TWIA). FMN phosphoryl threonine is present on Thr-185. The next 5 membrane-spanning stretches (helical) occupy residues 212 to 232 (STGV…IVLL), 239 to 259 (WHIS…GFLL), 265 to 285 (ASPL…FIAT), 291 to 311 (ATSP…VYII), and 315 to 335 (GGYP…APFI).

This sequence belongs to the NqrB/RnfD family. In terms of assembly, the complex is composed of six subunits: RnfA, RnfB, RnfC, RnfD, RnfE and RnfG. FMN serves as cofactor.

It localises to the cell inner membrane. Part of a membrane-bound complex that couples electron transfer with translocation of ions across the membrane. In Shewanella oneidensis (strain ATCC 700550 / JCM 31522 / CIP 106686 / LMG 19005 / NCIMB 14063 / MR-1), this protein is Ion-translocating oxidoreductase complex subunit D.